Reading from the N-terminus, the 206-residue chain is Large ribosomal subunit protein eL13z (206 aa).

A disordered region spans residues 183-206 (ERTNKRHAGARAKRAADAEKEEKK). Basic residues predominate over residues 186–195 (NKRHAGARAK). Over residues 196 to 206 (RAADAEKEEKK) the composition is skewed to basic and acidic residues.

It belongs to the eukaryotic ribosomal protein eL13 family.

The protein is Large ribosomal subunit protein eL13z of Brassica napus (Rape).